The primary structure comprises 344 residues: Probable glucan endo-1,3-beta-glucosidase At4g16260 (344 aa).

Residues 1–21 (MTTLFLLIALFITTILNPTSG) form the signal peptide. Glu-116 functions as the Proton donor in the catalytic mechanism. Residue Glu-257 is the Nucleophile of the active site.

The protein belongs to the glycosyl hydrolase 17 family. As to quaternary structure, (Microbial infection) Interacts with the 30C02 effector protein (AC G3GD54) of the beet cyst nematode Heterodera schachtii. Interaction with the 30C02 effector protein may potentially suppress beta-1,3-glucanase activity and plant defense.

Its subcellular location is the secreted. The enzyme catalyses Hydrolysis of (1-&gt;3)-beta-D-glucosidic linkages in (1-&gt;3)-beta-D-glucans.. Functionally, may be involved in plant defense against cyst nematode pathogens. The protein is Probable glucan endo-1,3-beta-glucosidase At4g16260 of Arabidopsis thaliana (Mouse-ear cress).